The primary structure comprises 1342 residues: DNA-directed RNA polymerase subunit beta (1342 aa).

Belongs to the RNA polymerase beta chain family. The RNAP catalytic core consists of 2 alpha, 1 beta, 1 beta' and 1 omega subunit. When a sigma factor is associated with the core the holoenzyme is formed, which can initiate transcription.

The catalysed reaction is RNA(n) + a ribonucleoside 5'-triphosphate = RNA(n+1) + diphosphate. DNA-dependent RNA polymerase catalyzes the transcription of DNA into RNA using the four ribonucleoside triphosphates as substrates. The sequence is that of DNA-directed RNA polymerase subunit beta from Serratia proteamaculans (strain 568).